Consider the following 115-residue polypeptide: Replication initiation control protein YabA (115 aa).

Zn(2+) contacts are provided by histidine 86, cysteine 88, cysteine 102, and cysteine 105.

This sequence belongs to the YabA family. Homotetramer. Interacts with both DnaA and DnaN, acting as a bridge between these two proteins. Requires Zn(2+) as cofactor.

It localises to the cytoplasm. The protein resides in the nucleoid. In terms of biological role, involved in control of chromosome replication initiation. Inhibits the cooperative binding of DnaA to the oriC region, thus negatively regulating initiation of chromosome replication. Inhibits the ability of DnaA-ATP to form a helix on DNA; does not disassemble preformed DnaA-DNA helices. Decreases the residence time of DnaA on the chromosome at its binding sites (oriC, replication forks and promoter-binding sites). Tethers DnaA to the replication machinery via the DNA polymerase beta sliding clamp subunit (dnaN). Associates with oriC and other DnaA targets on the chromosome in a DnaA-dependent manner. In Enterococcus faecalis (strain ATCC 700802 / V583), this protein is Replication initiation control protein YabA.